The sequence spans 386 residues: MRAAPLLLARAASLSLGFLFLLFFWLDRSVLAKELKFVTLVFRHGDRSPIDTFPTDPIKESSWPQGFGQLTQLGMEQHYELGEYIRKRYRKFLNESYKHEQVYIRSTDVDRTLMSAMTNLAALFPPEGVSIWNPILLWQPIPVHTVPLSEDQLLYLPFRNCPRFQELESETLKSEEFQKRLHPYKDFIATLGKLSGLHGQDLFGIWSKVYDPLYCESVHNFTLPSWATEDTMTKLRELSELSLLSLYGIHKQKEKSRLQGGVLVNEILNHMKRATQIPSYKKLIMYSAHDTTVSGLQMALDVYNGLLPPYASCHLTELYFEKGEYFVEMYYRNETQHEPYPLMLPGCSPSCPLERFAELVGPVIPQDWSTECMTTNSHQGTEDSTD.

The N-terminal stretch at 1–32 is a signal peptide; the sequence is MRAAPLLLARAASLSLGFLFLLFFWLDRSVLA. Arg43 is a substrate binding site. His44 serves as the catalytic Nucleophile. Arg47 is a substrate binding site. Residue Asn94 is glycosylated (N-linked (GlcNAc...) asparagine). Substrate is bound at residue Arg111. 3 cysteine pairs are disulfide-bonded: Cys161–Cys372, Cys215–Cys313, and Cys347–Cys351. N-linked (GlcNAc...) asparagine glycosylation occurs at Asn220. His289 provides a ligand contact to substrate. Catalysis depends on Asp290, which acts as the Proton donor. N-linked (GlcNAc...) asparagine glycosylation is present at Asn333.

This sequence belongs to the histidine acid phosphatase family. Homodimer; dimer formation is required for phosphatase activity. N-glycosylated. High mannose content, partially sialylated and fucosylated biantennary complex. Also fucosylated with partially sialylated triantennary complex oligosaccharides. In terms of processing, proteolytically cleaved in seminal fluid to produce several peptides. Peptide PAPf39, the most prominent, forms amyloid beta-sheet fibrils, SEVI (semen-derived enhancer of viral infection). As to expression, highly expressed in the prostate, restricted to glandular and ductal epithelial cells. Also expressed in bladder, kidney, pancreas, lung, cervix, testis and ovary. Weak expression in a subset of pancreatic islet cells, squamous epithelia, the pilosebaceous unit, colonic neuroendocrine cells and skin adnexal structures. Low expression in prostate carcinoma cells and tissues. In terms of tissue distribution, widely expressed. Expressed in the sarcolemma of skeletal muscle.

The protein localises to the secreted. The protein resides in the cell membrane. It is found in the lysosome membrane. It localises to the nucleus. Its subcellular location is the cytoplasm. The protein localises to the cytosol. It catalyses the reaction a phosphate monoester + H2O = an alcohol + phosphate. It carries out the reaction 1-(9Z-octadecenoyl)-sn-glycero-3-phosphate + H2O = 1-(9Z-octadecenoyl)-sn-glycerol + phosphate. The catalysed reaction is a ribonucleoside 5'-phosphate + H2O = a ribonucleoside + phosphate. The enzyme catalyses O-phospho-L-tyrosyl-[protein] + H2O = L-tyrosyl-[protein] + phosphate. With respect to regulation, phosphatase activity inhibited by L(+)-tartrate, and by its derivative, alpha-benzylaminobenzylphosphonic acid. In terms of biological role, a non-specific tyrosine phosphatase that dephosphorylates a diverse number of substrates under acidic conditions (pH 4-6) including alkyl, aryl, and acyl orthophosphate monoesters and phosphorylated proteins. Has lipid phosphatase activity and inactivates lysophosphatidic acid in seminal plasma. Tyrosine phosphatase that acts as a tumor suppressor of prostate cancer through dephosphorylation of ERBB2 and deactivation of MAPK-mediated signaling. In addition to its tyrosine phosphatase activity has ecto-5'-nucleotidase activity in dorsal root ganglion (DRG) neurons. Generates adenosine from AMP which acts as a pain suppressor. Its function is as follows. (Microbial infection) Forms amyloid beta-sheet fibrils in semen. These fibrils, termed SEVI (semen-derived enhancer of viral infection) capture HIV virions, attach them to target cells and enhance infection. SEVI amyloid fibrils are degraded by polyphenol epigallocatechin-3-gallate (EGCG), a constituent of green tea. Target cell attachment and enhancement of HIV infection is inhibited by surfen. Also similarly boosts XMRV (xenotropic murine leukemia virus-related virus) infection. This chain is Prostatic acid phosphatase, found in Homo sapiens (Human).